Reading from the N-terminus, the 143-residue chain is Hemoglobin subunit alpha (143 aa).

The Globin domain occupies 2–143 (VLSPADKTNV…VSTVLVSKYR (142 aa)). S4 carries the post-translational modification Phosphoserine. K8 carries the N6-succinyllysine modification. T9 bears the Phosphothreonine mark. K12 carries the N6-succinyllysine modification. K17 is modified (N6-acetyllysine; alternate). The residue at position 17 (K17) is an N6-succinyllysine; alternate. At Y25 the chain carries Phosphotyrosine. Phosphoserine is present on S36. K41 carries the post-translational modification N6-succinyllysine. S51 carries the post-translational modification Phosphoserine. O2 is bound at residue H60. H89 is a binding site for heme b. S104 carries the phosphoserine modification. A Phosphothreonine modification is found at T110. Residue S126 is modified to Phosphoserine. Position 136 is a phosphothreonine (T136). The residue at position 140 (S140) is a Phosphoserine.

It belongs to the globin family. In terms of assembly, heterotetramer of two alpha chains and two beta chains. As to expression, red blood cells.

Functionally, involved in oxygen transport from the lung to the various peripheral tissues. Its function is as follows. Hemopressin acts as an antagonist peptide of the cannabinoid receptor CNR1. Hemopressin-binding efficiently blocks cannabinoid receptor CNR1 and subsequent signaling. This chain is Hemoglobin subunit alpha (HBA), found in Pipistrellus abramus (Japanese pipistrelle).